A 658-amino-acid polypeptide reads, in one-letter code: L-type lectin-domain containing receptor kinase V.4 (658 aa).

A signal peptide spans Met-1–Gly-25. A legume-lectin like region spans residues Lys-26–Phe-248. The Extracellular segment spans residues Lys-26–Leu-280. N-linked (GlcNAc...) asparagine glycans are attached at residues Asn-66 and Asn-196. Residues Val-281–Phe-301 form a helical membrane-spanning segment. Residues Tyr-302–Arg-658 are Cytoplasmic-facing. The Protein kinase domain occupies Lys-334–Val-592. ATP contacts are provided by residues Leu-340–Val-348 and Lys-363. The Proton acceptor role is filled by Asp-460.

In the C-terminal section; belongs to the protein kinase superfamily. Ser/Thr protein kinase family. It in the N-terminal section; belongs to the leguminous lectin family.

Its subcellular location is the cell membrane. It carries out the reaction L-seryl-[protein] + ATP = O-phospho-L-seryl-[protein] + ADP + H(+). The enzyme catalyses L-threonyl-[protein] + ATP = O-phospho-L-threonyl-[protein] + ADP + H(+). Functionally, involved in resistance response to the pathogenic oomycetes Phytophthora infestans and Phytophthora capsici and to the pathogenic bacteria Pseudomonas syringae. The polypeptide is L-type lectin-domain containing receptor kinase V.4 (Arabidopsis thaliana (Mouse-ear cress)).